We begin with the raw amino-acid sequence, 209 residues long: Uracil phosphoribosyltransferase (209 aa).

Residues R78, R103, and 130–138 (DPMLATAGS) each bind 5-phospho-alpha-D-ribose 1-diphosphate. Residues I193 and 198–200 (GDA) contribute to the uracil site. Residue D199 participates in 5-phospho-alpha-D-ribose 1-diphosphate binding.

This sequence belongs to the UPRTase family. Requires Mg(2+) as cofactor.

The catalysed reaction is UMP + diphosphate = 5-phospho-alpha-D-ribose 1-diphosphate + uracil. The protein operates within pyrimidine metabolism; UMP biosynthesis via salvage pathway; UMP from uracil: step 1/1. Its activity is regulated as follows. Allosterically activated by GTP. Functionally, catalyzes the conversion of uracil and 5-phospho-alpha-D-ribose 1-diphosphate (PRPP) to UMP and diphosphate. This is Uracil phosphoribosyltransferase from Methylibium petroleiphilum (strain ATCC BAA-1232 / LMG 22953 / PM1).